A 106-amino-acid chain; its full sequence is Large ribosomal subunit protein uL24 (106 aa).

The protein belongs to the universal ribosomal protein uL24 family. Part of the 50S ribosomal subunit.

One of two assembly initiator proteins, it binds directly to the 5'-end of the 23S rRNA, where it nucleates assembly of the 50S subunit. Its function is as follows. One of the proteins that surrounds the polypeptide exit tunnel on the outside of the subunit. In Porphyromonas gingivalis (strain ATCC 33277 / DSM 20709 / CIP 103683 / JCM 12257 / NCTC 11834 / 2561), this protein is Large ribosomal subunit protein uL24.